The chain runs to 179 residues: Large ribosomal subunit protein uL5 (179 aa).

The protein belongs to the universal ribosomal protein uL5 family. Part of the 50S ribosomal subunit; part of the 5S rRNA/L5/L18/L25 subcomplex. Contacts the 5S rRNA and the P site tRNA. Forms a bridge to the 30S subunit in the 70S ribosome.

This is one of the proteins that bind and probably mediate the attachment of the 5S RNA into the large ribosomal subunit, where it forms part of the central protuberance. In the 70S ribosome it contacts protein S13 of the 30S subunit (bridge B1b), connecting the 2 subunits; this bridge is implicated in subunit movement. Contacts the P site tRNA; the 5S rRNA and some of its associated proteins might help stabilize positioning of ribosome-bound tRNAs. This chain is Large ribosomal subunit protein uL5, found in Nitratidesulfovibrio vulgaris (strain ATCC 29579 / DSM 644 / CCUG 34227 / NCIMB 8303 / VKM B-1760 / Hildenborough) (Desulfovibrio vulgaris).